The primary structure comprises 187 residues: Ribosome-recycling factor (187 aa).

The protein belongs to the RRF family.

The protein localises to the cytoplasm. Functionally, responsible for the release of ribosomes from messenger RNA at the termination of protein biosynthesis. May increase the efficiency of translation by recycling ribosomes from one round of translation to another. In Parabacteroides distasonis (strain ATCC 8503 / DSM 20701 / CIP 104284 / JCM 5825 / NCTC 11152), this protein is Ribosome-recycling factor.